The chain runs to 260 residues: Thrombin-like enzyme 2 (260 aa).

The first 18 residues, 1 to 18 (MMLIRVLANLLILQLSYA), serve as a signal peptide directing secretion. Residues 19–24 (QKSSEL) constitute a propeptide that is removed on maturation. The 227-residue stretch at 25-251 (VIGGDECNIN…HLDWIQSIIA (227 aa)) folds into the Peptidase S1 domain. 6 disulfide bridges follow: C31/C165, C52/C68, C102/C258, C144/C212, C176/C191, and C202/C227. Catalysis depends on H67, which acts as the Charge relay system. An N-linked (GlcNAc...) asparagine glycan is attached at N105. D112 functions as the Charge relay system in the catalytic mechanism. 2 N-linked (GlcNAc...) asparagine glycosylation sites follow: N156 and N172. The active-site Charge relay system is S206. N-linked (GlcNAc...) asparagine glycosylation occurs at N253.

It belongs to the peptidase S1 family. Snake venom subfamily. Monomer. In terms of tissue distribution, expressed by the venom gland.

It is found in the secreted. Functionally, thrombin-like snake venom serine protease. This Trimeresurus albolabris (White-lipped pit viper) protein is Thrombin-like enzyme 2.